The following is a 404-amino-acid chain: Cysteine desulfurase IscS (404 aa).

Residues 75-76 (AT), Asn155, Gln183, and 203-205 (SAH) contribute to the pyridoxal 5'-phosphate site. Lys206 carries the post-translational modification N6-(pyridoxal phosphate)lysine. Thr243 provides a ligand contact to pyridoxal 5'-phosphate. Cys328 functions as the Cysteine persulfide intermediate in the catalytic mechanism. Cys328 contacts [2Fe-2S] cluster.

The protein belongs to the class-V pyridoxal-phosphate-dependent aminotransferase family. NifS/IscS subfamily. As to quaternary structure, homodimer. Forms a heterotetramer with IscU, interacts with other sulfur acceptors. It depends on pyridoxal 5'-phosphate as a cofactor.

It is found in the cytoplasm. It catalyses the reaction (sulfur carrier)-H + L-cysteine = (sulfur carrier)-SH + L-alanine. It participates in cofactor biosynthesis; iron-sulfur cluster biosynthesis. Its function is as follows. Master enzyme that delivers sulfur to a number of partners involved in Fe-S cluster assembly, tRNA modification or cofactor biosynthesis. Catalyzes the removal of elemental sulfur atoms from cysteine to produce alanine. Functions as a sulfur delivery protein for Fe-S cluster synthesis onto IscU, an Fe-S scaffold assembly protein, as well as other S acceptor proteins. The sequence is that of Cysteine desulfurase IscS from Shewanella piezotolerans (strain WP3 / JCM 13877).